A 113-amino-acid polypeptide reads, in one-letter code: U11-theraphotoxin-Hhn1a (113 aa).

A signal peptide spans 1–21; it reads MNTVRVTFLLVFVLAVSLGQA. A propeptide spanning residues 22–74 is cleaved from the precursor; that stretch reads DKDENRMEMQEKTEQGKSYLDFAENLLLQKLEELVAKLLEEDSEESRNSRQKR. Intrachain disulfides connect C75/C90, C82/C95, and C89/C110.

This sequence belongs to the neurotoxin 14 (magi-1) family. 01 (HNTX-16) subfamily. In terms of tissue distribution, expressed by the venom gland.

Its subcellular location is the secreted. In terms of biological role, probable ion channel inhibitor. The sequence is that of U11-theraphotoxin-Hhn1a from Cyriopagopus hainanus (Chinese bird spider).